A 407-amino-acid polypeptide reads, in one-letter code: Peptidase T (407 aa).

His-82 is a binding site for Zn(2+). Residue Asp-84 is part of the active site. Asp-143 is a binding site for Zn(2+). Residue Glu-177 is the Proton acceptor of the active site. Residues Glu-178, Asp-200, and His-382 each coordinate Zn(2+).

This sequence belongs to the peptidase M20B family. Requires Zn(2+) as cofactor.

The protein localises to the cytoplasm. It carries out the reaction Release of the N-terminal residue from a tripeptide.. Functionally, cleaves the N-terminal amino acid of tripeptides. In Streptococcus pyogenes serotype M49 (strain NZ131), this protein is Peptidase T.